We begin with the raw amino-acid sequence, 301 residues long: Methionine aminopeptidase (301 aa).

H65 contacts substrate. Residues D85, D96, and H156 each coordinate a divalent metal cation. H164 is a binding site for substrate. The a divalent metal cation site is built by E189 and E284.

Belongs to the peptidase M24A family. Methionine aminopeptidase archaeal type 2 subfamily. In terms of assembly, monomer. Requires Co(2+) as cofactor. Zn(2+) serves as cofactor. The cofactor is Mn(2+). Fe(2+) is required as a cofactor.

The catalysed reaction is Release of N-terminal amino acids, preferentially methionine, from peptides and arylamides.. Its function is as follows. Removes the N-terminal methionine from nascent proteins. The N-terminal methionine is often cleaved when the second residue in the primary sequence is small and uncharged (Met-Ala-, Cys, Gly, Pro, Ser, Thr, or Val). This Saccharolobus solfataricus (strain ATCC 35092 / DSM 1617 / JCM 11322 / P2) (Sulfolobus solfataricus) protein is Methionine aminopeptidase.